The following is a 462-amino-acid chain: Succinate semialdehyde dehydrogenase [NAD(P)+] Sad (462 aa).

NADP(+)-binding positions include 136 to 137 (WN), 160 to 163 (KHAP), and 212 to 213 (GS). The active-site Proton acceptor is E234. L235 is an NADP(+) binding site. C268 serves as the catalytic Nucleophile. E365 lines the NADP(+) pocket.

This sequence belongs to the aldehyde dehydrogenase family. As to quaternary structure, homodimer.

The enzyme catalyses succinate semialdehyde + NAD(+) + H2O = succinate + NADH + 2 H(+). It catalyses the reaction succinate semialdehyde + NADP(+) + H2O = succinate + NADPH + 2 H(+). The protein operates within amino-acid degradation; 4-aminobutanoate degradation. Catalyzes the NAD(+)-dependent oxidation of succinate semialdehyde to succinate. It acts preferentially with NAD as cosubstrate but can also use NADP. Prevents the toxic accumulation of succinate semialdehyde (SSA) and plays an important role when arginine and putrescine are used as the sole nitrogen or carbon sources. In Escherichia coli (strain K12), this protein is Succinate semialdehyde dehydrogenase [NAD(P)+] Sad (sad).